Consider the following 444-residue polypeptide: Probable glycine dehydrogenase (decarboxylating) subunit 1 (444 aa).

The protein belongs to the GcvP family. N-terminal subunit subfamily. As to quaternary structure, the glycine cleavage system is composed of four proteins: P, T, L and H. In this organism, the P 'protein' is a heterodimer of two subunits.

It carries out the reaction N(6)-[(R)-lipoyl]-L-lysyl-[glycine-cleavage complex H protein] + glycine + H(+) = N(6)-[(R)-S(8)-aminomethyldihydrolipoyl]-L-lysyl-[glycine-cleavage complex H protein] + CO2. Functionally, the glycine cleavage system catalyzes the degradation of glycine. The P protein binds the alpha-amino group of glycine through its pyridoxal phosphate cofactor; CO(2) is released and the remaining methylamine moiety is then transferred to the lipoamide cofactor of the H protein. The protein is Probable glycine dehydrogenase (decarboxylating) subunit 1 of Chlorobaculum tepidum (strain ATCC 49652 / DSM 12025 / NBRC 103806 / TLS) (Chlorobium tepidum).